The primary structure comprises 396 residues: S-adenosylmethionine synthase (396 aa).

His-16 is an ATP binding site. Mg(2+) is bound at residue Asp-18. Glu-44 provides a ligand contact to K(+). L-methionine-binding residues include Glu-57 and Gln-100. Residues 100 to 110 (QSVDINQGVDR) form a flexible loop region. ATP contacts are provided by residues 165–167 (DAK), Asp-240, 246–247 (RK), Ala-263, and Lys-267. Asp-240 lines the L-methionine pocket. Lys-271 serves as a coordination point for L-methionine.

The protein belongs to the AdoMet synthase family. In terms of assembly, homotetramer; dimer of dimers. Mg(2+) serves as cofactor. K(+) is required as a cofactor.

The protein resides in the cytoplasm. The enzyme catalyses L-methionine + ATP + H2O = S-adenosyl-L-methionine + phosphate + diphosphate. The protein operates within amino-acid biosynthesis; S-adenosyl-L-methionine biosynthesis; S-adenosyl-L-methionine from L-methionine: step 1/1. Its function is as follows. Catalyzes the formation of S-adenosylmethionine (AdoMet) from methionine and ATP. The overall synthetic reaction is composed of two sequential steps, AdoMet formation and the subsequent tripolyphosphate hydrolysis which occurs prior to release of AdoMet from the enzyme. This Pseudomonas aeruginosa (strain UCBPP-PA14) protein is S-adenosylmethionine synthase.